A 92-amino-acid polypeptide reads, in one-letter code: Evasin P675 (92 aa).

An N-terminal signal peptide occupies residues 1 to 24; sequence MEVKTFAFLQIAVIIALGLHLAPA. Disulfide bonds link C44/C63, C48/C65, and C59/C76. N-linked (GlcNAc...) asparagine glycosylation occurs at N47. N-linked (GlcNAc...) asparagine glycosylation occurs at N70.

Its subcellular location is the secreted. Its function is as follows. Salivary chemokine-binding protein which binds to host chemokines CXCL1, CXCL2, CXCL3, CXCL4, CXCL5, CXCL6, CXCL10, CXCL11 and CXCL13. This is Evasin P675 from Ixodes ricinus (Common tick).